Here is a 117-residue protein sequence, read N- to C-terminus: Non-specific lipid-transfer protein 1 (117 aa).

Residues 1–25 (MAGLVKLSCLVLACMIVAGPIATNA) form the signal peptide. Cystine bridges form between Cys29-Cys76, Cys39-Cys53, Cys54-Cys99, and Cys74-Cys113.

This sequence belongs to the plant LTP family.

Its function is as follows. Plant non-specific lipid-transfer proteins transfer phospholipids as well as galactolipids across membranes. May play a role in wax or cutin deposition in the cell walls of expanding epidermal cells and certain secretory tissues. The protein is Non-specific lipid-transfer protein 1 (LTP1) of Brassica napus (Rape).